We begin with the raw amino-acid sequence, 273 residues long: Galactose-binding lectin (273 aa).

The N-terminal stretch at 1-23 (MKPFCVFLTFFLLLAASSKKVDS) is a signal peptide. 2 residues coordinate Mn(2+): Glu-144 and Asp-146. Ca(2+) is bound by residues Asp-146, Tyr-148, Asn-150, and Asp-155. Residues Asp-155 and His-160 each coordinate Mn(2+).

The protein belongs to the leguminous lectin family. In terms of assembly, homotetramer.

D-galactose specific lectin. The sequence is that of Galactose-binding lectin from Arachis hypogaea (Peanut).